A 145-amino-acid polypeptide reads, in one-letter code: D-aminoacyl-tRNA deacylase (145 aa).

A Gly-cisPro motif, important for rejection of L-amino acids motif is present at residues 137-138 (GP).

The protein belongs to the DTD family. As to quaternary structure, homodimer.

The protein resides in the cytoplasm. It catalyses the reaction glycyl-tRNA(Ala) + H2O = tRNA(Ala) + glycine + H(+). The enzyme catalyses a D-aminoacyl-tRNA + H2O = a tRNA + a D-alpha-amino acid + H(+). An aminoacyl-tRNA editing enzyme that deacylates mischarged D-aminoacyl-tRNAs. Also deacylates mischarged glycyl-tRNA(Ala), protecting cells against glycine mischarging by AlaRS. Acts via tRNA-based rather than protein-based catalysis; rejects L-amino acids rather than detecting D-amino acids in the active site. By recycling D-aminoacyl-tRNA to D-amino acids and free tRNA molecules, this enzyme counteracts the toxicity associated with the formation of D-aminoacyl-tRNA entities in vivo and helps enforce protein L-homochirality. The protein is D-aminoacyl-tRNA deacylase of Pseudomonas putida (strain ATCC 700007 / DSM 6899 / JCM 31910 / BCRC 17059 / LMG 24140 / F1).